The sequence spans 343 residues: Phenylalanine--tRNA ligase alpha subunit (343 aa).

Glu264 is a Mg(2+) binding site.

Belongs to the class-II aminoacyl-tRNA synthetase family. Phe-tRNA synthetase alpha subunit type 1 subfamily. In terms of assembly, tetramer of two alpha and two beta subunits. It depends on Mg(2+) as a cofactor.

It localises to the cytoplasm. The enzyme catalyses tRNA(Phe) + L-phenylalanine + ATP = L-phenylalanyl-tRNA(Phe) + AMP + diphosphate + H(+). The polypeptide is Phenylalanine--tRNA ligase alpha subunit (Azoarcus sp. (strain BH72)).